Here is a 273-residue protein sequence, read N- to C-terminus: Alcohol dehydrogenase-related 31 kDa protein (273 aa).

An NAD(+)-binding site is contributed by 11-34 (YVADCGGIALETCKVLMTKNIAKL). Ser-139 provides a ligand contact to substrate. The active-site Proton acceptor is the Tyr-152.

It belongs to the short-chain dehydrogenases/reductases (SDR) family.

The polypeptide is Alcohol dehydrogenase-related 31 kDa protein (Adhr) (Drosophila immigrans (Fruit fly)).